The following is a 721-amino-acid chain: Quinolinate synthase, chloroplastic (721 aa).

The transit peptide at 1 to 67 (MDAANLVMKS…KIPSNNSTFT (67 aa)) directs the protein to the chloroplast. Cysteine 133 acts as the Cysteine persulfide intermediate in catalysis. Residues histidine 283 and serine 309 each coordinate iminosuccinate. Residue cysteine 363 coordinates [4Fe-4S] cluster. Iminosuccinate is bound by residues 392-394 (YIN) and serine 414. Cysteine 487 is a [4Fe-4S] cluster binding site. Iminosuccinate contacts are provided by residues 513-515 (HFE) and threonine 538. Cysteine 643 lines the [4Fe-4S] cluster pocket.

It belongs to the quinolinate synthase family. Type 1 subfamily. As to quaternary structure, homodimer. The cofactor is [4Fe-4S] cluster.

The protein resides in the plastid. It is found in the chloroplast. The enzyme catalyses iminosuccinate + dihydroxyacetone phosphate = quinolinate + phosphate + 2 H2O + H(+). It functions in the pathway alkaloid biosynthesis; nicotine biosynthesis. Its pathway is cofactor biosynthesis; NAD(+) biosynthesis; quinolinate from iminoaspartate: step 1/1. Functionally, involved in the biosynthesis of pyridine alkaloid natural products, leading mainly to the production of anabasine, anatabine, nicotine and nornicotine, effective deterrents against herbivores with antiparasitic and pesticide properties (neurotoxins); nornicotine serves as the precursor in the synthesis of the carcinogen compound N'-nitrosonornicotine (NNN). Catalyzes the condensation of iminoaspartate with dihydroxyacetone phosphate to form quinolinate. The polypeptide is Quinolinate synthase, chloroplastic (Nicotiana tabacum (Common tobacco)).